We begin with the raw amino-acid sequence, 380 residues long: Homeobox protein ceh-6 (380 aa).

Positions 1-25 (MLIPSSSSIPSSLSASASDSEPSSL) are enriched in low complexity. Disordered regions lie at residues 1–31 (MLIP…SGIS), 167–190 (SGSV…SEQT), and 265–286 (GSPN…KKRT). Positions 187–261 (SEQTCPDDLE…LLFKWLEEAD (75 aa)) constitute a POU-specific domain. A DNA-binding region (homeobox) is located at residues 281–340 (KRKKRTSIEVNVKSRLEFHFQSNQKPNAQEITQVAMELQLEKEVVRVWFCNRRQKEKRIA).

The protein belongs to the POU transcription factor family. Class-3 subfamily. As to quaternary structure, interacts with egl-27, sox-2 and sem-4. Interacts with wdr-5.1. Expressed in a series of neurons in the ring ganglia, excretory cell, dividing neuroblasts in the ventral cord and rectal cells.

It localises to the nucleus. Vital for embryonic development and essential for the proper function of the excretory cell. Required for the transdifferentiation of the Y rectal epithelial cell to the PDA motor neuron during larval development. This Caenorhabditis elegans protein is Homeobox protein ceh-6.